Reading from the N-terminus, the 214-residue chain is uncharacterized protein (214 aa).

A run of 2 helical transmembrane segments spans residues 23 to 43 (ILVG…VAAA) and 65 to 85 (VLYA…PVLL). Residues 96 to 115 (ATRPTGASVRGGRSIGSGHP) form a disordered region. The next 2 membrane-spanning stretches (helical) occupy residues 152 to 172 (VVLT…TYLM) and 181 to 201 (WISY…EWLY).

Its subcellular location is the cell membrane. This is an uncharacterized protein from Mycobacterium tuberculosis (strain CDC 1551 / Oshkosh).